Here is a 462-residue protein sequence, read N- to C-terminus: Phospho-2-dehydro-3-deoxyheptonate aldolase AroG (462 aa).

Cysteine 87 is a Mn(2+) binding site. Phosphoenolpyruvate contacts are provided by residues arginine 126, 283–284 (ER), lysine 306, and arginine 337. Mn(2+) is bound by residues histidine 369, glutamate 411, and aspartate 441.

In terms of assembly, homodimer. Interacts with Rv0948c. Mn(2+) is required as a cofactor. Co(2+) serves as cofactor. The cofactor is Cd(2+).

The catalysed reaction is D-erythrose 4-phosphate + phosphoenolpyruvate + H2O = 7-phospho-2-dehydro-3-deoxy-D-arabino-heptonate + phosphate. The protein operates within metabolic intermediate biosynthesis; chorismate biosynthesis; chorismate from D-erythrose 4-phosphate and phosphoenolpyruvate: step 1/7. Its activity is regulated as follows. Feedback inhibited by tryptophan, tyrosine, phenylalanine and chorismate. In terms of biological role, catalyzes an aldol-like condensation reaction between phosphoenolpyruvate (PEP) and D-erythrose 4-phosphate (E4P) to generate 3-deoxy-D-arabino-heptulosonate 7-phosphate (DAH7P) and inorganic phosphate. This chain is Phospho-2-dehydro-3-deoxyheptonate aldolase AroG (aroG), found in Mycobacterium tuberculosis (strain ATCC 25618 / H37Rv).